Reading from the N-terminus, the 592-residue chain is Craniofacial development protein 2 (592 aa).

The span at 1–16 (MEEFDSKDISTSKDED) shows a compositional bias: basic and acidic residues. Disordered regions lie at residues 1 to 225 (MEEF…KGQS) and 499 to 592 (VTNE…DCNN). Residues 25-42 (HEDDINELVKEDEVDGEE) show a composition bias toward acidic residues. Basic and acidic residues-rich tracts occupy residues 78 to 108 (SRESGGRIIEKEDAAAEQEKGAESEDARQEE) and 147 to 162 (KVEELEKPKKAEEVKL). Residues 175–184 (LTQQGRLSGR) show a composition bias toward polar residues. Composition is skewed to basic and acidic residues over residues 185–207 (TSEDEPRRSEGVQHATGEERRAD), 508–523 (EEAKSVLKQNEKEKPE), 552–562 (SVFKQDEKDKP), and 580–592 (EKCDLEKKKDCNN). The tract at residues 499–578 (VTNEEDATNE…SVPSLPAGSG (80 aa)) is hydrophilic.

Phosphorylated by CK2 (casein kinase II) in vitro. In terms of tissue distribution, expressed in liver and lung with higher expression in brain.

The protein localises to the cytoplasm. Its subcellular location is the nucleus. This chain is Craniofacial development protein 2 (CFDP2), found in Bos taurus (Bovine).